We begin with the raw amino-acid sequence, 428 residues long: GTPase Obg (428 aa).

Residues M1–L158 form the Obg domain. Residues K118 to P145 are disordered. In terms of domain architecture, OBG-type G spans A159–E329. Residues G165–S172, F190–V194, D212–G215, N282–D285, and S310–I312 contribute to the GTP site. Mg(2+)-binding residues include S172 and T192. Residues R350 to D428 form the OCT domain.

It belongs to the TRAFAC class OBG-HflX-like GTPase superfamily. OBG GTPase family. In terms of assembly, monomer. Requires Mg(2+) as cofactor.

The protein localises to the cytoplasm. In terms of biological role, an essential GTPase which binds GTP, GDP and possibly (p)ppGpp with moderate affinity, with high nucleotide exchange rates and a fairly low GTP hydrolysis rate. Plays a role in control of the cell cycle, stress response, ribosome biogenesis and in those bacteria that undergo differentiation, in morphogenesis control. This chain is GTPase Obg, found in Bacillus pumilus (strain SAFR-032).